The sequence spans 837 residues: Exonuclease 1 (837 aa).

Residues 1 to 99 (MGIQGLLQFI…RSRRERRQSN (99 aa)) are N-domain. Residues D30, D78, E150, D152, D171, D173, and D225 each coordinate Mg(2+). The interval 129–386 (MAHKVIKAAR…RLEVNSVSHA (258 aa)) is interaction with MSH3. Residues 138-229 (RALGVDCLVA…ILSGCDYLAS (92 aa)) are I-domain. Disordered regions lie at residues 345-367 (TMPA…PGTN) and 440-477 (IKEN…PSKM). The segment at 387–488 (PQLKEKPSTL…NKFATFLQRR (102 aa)) is interaction with MLH1. Over residues 449–462 (TSPNSSKMSKSCPD) the composition is skewed to polar residues. Position 480 is an N6-acetyllysine (K480). A disordered region spans residues 555–589 (NGTHNLSSQIPGNAAVSPEDEAQSSETSKLLGAMS). Residues 556–565 (GTHNLSSQIP) show a composition bias toward polar residues. Residues S589 and S601 each carry the phosphoserine modification. The interval 591–837 (PSLGTLRSCF…CVRAQRAIFH (247 aa)) is interaction with MSH2. The interval 608–740 (EFSRTPSPSA…GLCRSSSMDS (133 aa)) is disordered. Composition is skewed to polar residues over residues 611–623 (RTPS…TLQQ), 665–690 (SSRS…SSRD), and 699–713 (NNKS…NSKQ). A Phosphothreonine modification is found at T612. A phosphoserine mark is found at S614 and S666. The residue at position 737 (S737) is a Phosphoserine. Positions 778–837 (LQTKISELWKNFGFKKDSEKLPSCKKPLSPVKDNIQLTPETEDEIFNKPECVRAQRAIFH) are interaction with MLH1.

The protein belongs to the XPG/RAD2 endonuclease family. EXO1 subfamily. In terms of assembly, interacts with the MLH1-PMS2 heterodimer via MLH1. Interacts with MSH3. Interacts with the MSH2-MSH6 heterodimer via MSH2, and this interaction may increase the processivity of the 5'-&gt;3' exonuclease activity. Interacts with PCNA, and this interaction may both stimulate the cryptic 3'-&gt;5' exonuclease activity and suppress the 5'-&gt;3' exonuclease activity. Interacts with WRN, and this interaction stimulates both the 5'-&gt;3' exonuclease activity and cleavage of 5'-overhanging flap structures. Interacts with RECQL/RECQ1, and this interaction stimulates cleavage of 5'-overhanging flap structures. Interacts with DNA helicase ZGRF1; the interaction is increased following DNA damage induction. Requires Mg(2+) as cofactor. In terms of processing, phosphorylated upon DNA damage and in response to agents stalling DNA replication, probably by ATM or ATR. Highly expressed in the spleen and testis. Also expressed in the bone marrow, brain, lung, lymph node and thymus.

It localises to the nucleus. In terms of biological role, 5'-&gt;3' double-stranded DNA exonuclease which may also possess a cryptic 3'-&gt;5' double-stranded DNA exonuclease activity. Functions in DNA mismatch repair (MMR) to excise mismatch-containing DNA tracts directed by strand breaks located either 5' or 3' to the mismatch. Also exhibits endonuclease activity against 5'-overhanging flap structures similar to those generated by displacement synthesis when DNA polymerase encounters the 5'-end of a downstream Okazaki fragment. Required for somatic hypermutation (SHM) and class switch recombination (CSR) of immunoglobulin genes. Essential for male and female meiosis. The polypeptide is Exonuclease 1 (Exo1) (Mus musculus (Mouse)).